The sequence spans 136 residues: ATP synthase F(0) complex subunit C1, mitochondrial (136 aa).

A mitochondrion-targeting transit peptide spans 1–61 (MQTTGALLIS…REFQTSVVSR (61 aa)). Residues 77–97 (VGVAGSGAGIGTVFGSLIIGY) form a helical membrane-spanning segment. Lys104 is modified (N6,N6,N6-trimethyllysine). The chain crosses the membrane as a helical span at residues 112–132 (ILGFALSEAMGLFCLMVAFLI).

The protein belongs to the ATPase C chain family. Homooctamer; the c-ring consists of eight c subunits forming a circle, and each subunit adopts a hairpin shape. Component of the ATP synthase complex composed at least of ATP5F1A/subunit alpha, ATP5F1B/subunit beta, ATP5MC1/subunit c (homooctomer), MT-ATP6/subunit a, MT-ATP8/subunit 8, ATP5ME/subunit e, ATP5MF/subunit f, ATP5MG/subunit g, ATP5MK/subunit k, ATP5MJ/subunit j, ATP5F1C/subunit gamma, ATP5F1D/subunit delta, ATP5F1E/subunit epsilon, ATP5PF/subunit F6, ATP5PB/subunit b, ATP5PD/subunit d, ATP5PO/subunit OSCP. ATP synthase complex consists of a soluble F(1) head domain (subunits alpha(3) and beta(3)) - the catalytic core - and a membrane F(0) domain - the membrane proton channel (subunits c, a, 8, e, f, g, k and j). These two domains are linked by a central stalk (subunits gamma, delta, and epsilon) rotating inside the F1 region and a stationary peripheral stalk (subunits F6, b, d, and OSCP). Interacts with TMEM70 (homooligomer form); this interaction facilitates the oligomer formation of subunit c/ATP5MC1 (c-ring) and the c-ring membrane insertion and also protects ATP5MC1 against intramitochondrial proteolysis. In terms of processing, trimethylated by ATPSCKMT at Lys-104. Methylation is required for proper incorporation of the C subunit into the ATP synthase complex and mitochondrial respiration.

Its subcellular location is the mitochondrion membrane. The catalysed reaction is H(+)(in) = H(+)(out). Its function is as follows. Subunit c, of the mitochondrial membrane ATP synthase complex (F(1)F(0) ATP synthase or Complex V) that produces ATP from ADP in the presence of a proton gradient across the membrane which is generated by electron transport complexes of the respiratory chain. ATP synthase complex consist of a soluble F(1) head domain - the catalytic core - and a membrane F(1) domain - the membrane proton channel. These two domains are linked by a central stalk rotating inside the F(1) region and a stationary peripheral stalk. During catalysis, ATP synthesis in the catalytic domain of F(1) is coupled via a rotary mechanism of the central stalk subunits to proton translocation. With the subunit a (MT-ATP6), forms the proton-conducting channel in the F(0) domain, that contains two crucial half-channels (inlet and outlet) that facilitate proton movement from the mitochondrial intermembrane space (IMS) into the matrix. Protons are taken up via the inlet half-channel and released through the outlet half-channel, following a Grotthuss mechanism. This chain is ATP synthase F(0) complex subunit C1, mitochondrial, found in Bos taurus (Bovine).